A 62-amino-acid polypeptide reads, in one-letter code: Photosystem II reaction center protein Z (62 aa).

2 consecutive transmembrane segments (helical) span residues 8-28 and 41-61; these read VLTA…VAYA and YVGS…NFLV.

Belongs to the PsbZ family. PSII is composed of 1 copy each of membrane proteins PsbA, PsbB, PsbC, PsbD, PsbE, PsbF, PsbH, PsbI, PsbJ, PsbK, PsbL, PsbM, PsbT, PsbX, PsbY, PsbZ, Psb30/Ycf12, peripheral proteins PsbO, CyanoQ (PsbQ), PsbU, PsbV and a large number of cofactors. It forms dimeric complexes.

It is found in the cellular thylakoid membrane. May control the interaction of photosystem II (PSII) cores with the light-harvesting antenna, regulates electron flow through the 2 photosystem reaction centers. PSII is a light-driven water plastoquinone oxidoreductase, using light energy to abstract electrons from H(2)O, generating a proton gradient subsequently used for ATP formation. The polypeptide is Photosystem II reaction center protein Z (Crocosphaera subtropica (strain ATCC 51142 / BH68) (Cyanothece sp. (strain ATCC 51142))).